The sequence spans 324 residues: Beta-ketoacyl-[acyl-carrier-protein] synthase III (324 aa).

Catalysis depends on residues C112 and H251. The segment at 252-256 (QANIR) is ACP-binding. Residue N281 is part of the active site.

This sequence belongs to the thiolase-like superfamily. FabH family. Homodimer.

Its subcellular location is the cytoplasm. It carries out the reaction malonyl-[ACP] + acetyl-CoA + H(+) = 3-oxobutanoyl-[ACP] + CO2 + CoA. It functions in the pathway lipid metabolism; fatty acid biosynthesis. Catalyzes the condensation reaction of fatty acid synthesis by the addition to an acyl acceptor of two carbons from malonyl-ACP. Catalyzes the first condensation reaction which initiates fatty acid synthesis and may therefore play a role in governing the total rate of fatty acid production. Possesses both acetoacetyl-ACP synthase and acetyl transacylase activities. Its substrate specificity determines the biosynthesis of branched-chain and/or straight-chain of fatty acids. The chain is Beta-ketoacyl-[acyl-carrier-protein] synthase III from Desulfotalea psychrophila (strain LSv54 / DSM 12343).